The following is a 740-amino-acid chain: Ion-translocating oxidoreductase complex subunit C (740 aa).

4Fe-4S ferredoxin-type domains follow at residues 369–397 and 407–436; these read GEPQ…QQLY and KATT…VQYF. [4Fe-4S] cluster is bound by residues cysteine 377, cysteine 380, cysteine 383, cysteine 387, cysteine 416, cysteine 419, cysteine 422, and cysteine 426. The disordered stretch occupies residues 602 to 718; it reads KLEQQQANAE…EEQVDPRKAA (117 aa).

It belongs to the 4Fe4S bacterial-type ferredoxin family. RnfC subfamily. As to quaternary structure, the complex is composed of six subunits: RsxA, RsxB, RsxC, RsxD, RsxE and RsxG. Requires [4Fe-4S] cluster as cofactor.

Its subcellular location is the cell inner membrane. Functionally, part of a membrane-bound complex that couples electron transfer with translocation of ions across the membrane. Required to maintain the reduced state of SoxR. The sequence is that of Ion-translocating oxidoreductase complex subunit C from Shigella sonnei (strain Ss046).